We begin with the raw amino-acid sequence, 123 residues long: Small ribosomal subunit protein uS12 (123 aa).

Aspartate 89 carries the post-translational modification 3-methylthioaspartic acid.

This sequence belongs to the universal ribosomal protein uS12 family. Part of the 30S ribosomal subunit. Contacts proteins S8 and S17. May interact with IF1 in the 30S initiation complex.

Functionally, with S4 and S5 plays an important role in translational accuracy. Its function is as follows. Interacts with and stabilizes bases of the 16S rRNA that are involved in tRNA selection in the A site and with the mRNA backbone. Located at the interface of the 30S and 50S subunits, it traverses the body of the 30S subunit contacting proteins on the other side and probably holding the rRNA structure together. The combined cluster of proteins S8, S12 and S17 appears to hold together the shoulder and platform of the 30S subunit. This chain is Small ribosomal subunit protein uS12, found in Geobacter metallireducens (strain ATCC 53774 / DSM 7210 / GS-15).